A 22-amino-acid chain; its full sequence is Lantibiotic mutacin B-Ny266 (22 aa).

Positions 3–7 (SWSFC) form a cross-link, lanthionine (Ser-Cys). Position 5 is a 2,3-didehydroalanine (Ser) (serine 5). The beta-methyllanthionine (Thr-Cys) cross-link spans 8–11 (TPGC). Threonine 14 is subject to 2,3-didehydrobutyrine. A cross-link (lanthionine (Ser-Cys)) is located at residues 16–21 (SFNSYC). A cross-link (S-(2-aminovinyl)-D-cysteine (Ser-Cys)) is located at residues 19 to 22 (SYCC).

Maturation of lantibiotics involves the enzymatic conversion of Thr, and Ser into dehydrated AA and the formation of thioether bonds with cysteine. The C-terminal lanthionine undergoes decarboxylation. This is followed by membrane translocation and cleavage of the modified precursor. In terms of processing, it is not established whether the 2,3-didehydrobutyrine is the E- or Z-isomer.

In terms of biological role, lanthionine-containing peptide antibiotic (lantibiotic) active on Gram-positive bacteria. The bactericidal activity of lantibiotics is based on depolarization of energized bacterial cytoplasmic membranes, initiated by the formation of aqueous transmembrane pores. This Streptococcus mutans protein is Lantibiotic mutacin B-Ny266.